The sequence spans 344 residues: S-adenosylmethionine:tRNA ribosyltransferase-isomerase (344 aa).

It belongs to the QueA family. As to quaternary structure, monomer.

The protein localises to the cytoplasm. The catalysed reaction is 7-aminomethyl-7-carbaguanosine(34) in tRNA + S-adenosyl-L-methionine = epoxyqueuosine(34) in tRNA + adenine + L-methionine + 2 H(+). It participates in tRNA modification; tRNA-queuosine biosynthesis. Functionally, transfers and isomerizes the ribose moiety from AdoMet to the 7-aminomethyl group of 7-deazaguanine (preQ1-tRNA) to give epoxyqueuosine (oQ-tRNA). The protein is S-adenosylmethionine:tRNA ribosyltransferase-isomerase of Levilactobacillus brevis (strain ATCC 367 / BCRC 12310 / CIP 105137 / JCM 1170 / LMG 11437 / NCIMB 947 / NCTC 947) (Lactobacillus brevis).